A 278-amino-acid polypeptide reads, in one-letter code: Small ribosomal subunit protein uS5 (278 aa).

The interval 1–43 is disordered; the sequence is MADAPAPAGGRGGFRGGFGGRGRGRGRGRGRGRGRGRGAKDGD. Residues 9 to 21 are compositionally biased toward gly residues; sequence GGRGGFRGGFGGR. A compositionally biased stretch (basic residues) spans 22–37; it reads GRGRGRGRGRGRGRGR. Residues 88–151 form the S5 DRBM domain; the sequence is LKDEVLKIMP…ILAKLSVVPV (64 aa).

Belongs to the universal ribosomal protein uS5 family.

In terms of biological role, component of the ribosome, a large ribonucleoprotein complex responsible for the synthesis of proteins in the cell. The small ribosomal subunit (SSU) binds messenger RNAs (mRNAs) and translates the encoded message by selecting cognate aminoacyl-transfer RNA (tRNA) molecules. The large subunit (LSU) contains the ribosomal catalytic site termed the peptidyl transferase center (PTC), which catalyzes the formation of peptide bonds, thereby polymerizing the amino acids delivered by tRNAs into a polypeptide chain. The nascent polypeptides leave the ribosome through a tunnel in the LSU and interact with protein factors that function in enzymatic processing, targeting, and the membrane insertion of nascent chains at the exit of the ribosomal tunnel. Plays a role in the assembly and function of the 40S ribosomal subunit. Mutations in this protein affects the control of translational fidelity. Involved in nucleolar processing of pre-18S ribosomal RNA and ribosome assembly. The chain is Small ribosomal subunit protein uS5 (RPS2) from Urechis caupo (Innkeeper worm).